The chain runs to 301 residues: Diaminopimelate epimerase (301 aa).

Asparagine 15, glutamine 47, and asparagine 67 together coordinate substrate. Cysteine 76 acts as the Proton donor in catalysis. Substrate-binding positions include glycine 77 to asparagine 78, asparagine 163, asparagine 197, and glutamate 215 to arginine 216. Cysteine 224 functions as the Proton acceptor in the catalytic mechanism. Substrate is bound at residue glycine 225–serine 226. Residues serine 280–arginine 301 are disordered.

This sequence belongs to the diaminopimelate epimerase family. In terms of assembly, homodimer.

It localises to the cytoplasm. The catalysed reaction is (2S,6S)-2,6-diaminopimelate = meso-2,6-diaminopimelate. It functions in the pathway amino-acid biosynthesis; L-lysine biosynthesis via DAP pathway; DL-2,6-diaminopimelate from LL-2,6-diaminopimelate: step 1/1. Its function is as follows. Catalyzes the stereoinversion of LL-2,6-diaminopimelate (L,L-DAP) to meso-diaminopimelate (meso-DAP), a precursor of L-lysine and an essential component of the bacterial peptidoglycan. In Rhizobium leguminosarum bv. trifolii (strain WSM2304), this protein is Diaminopimelate epimerase.